Reading from the N-terminus, the 431-residue chain is Fibrinogen C domain-containing protein 1 (431 aa).

The Cytoplasmic portion of the chain corresponds to 1–3; that stretch reads MLC. The chain crosses the membrane as a helical; Signal-anchor for type II membrane protein span at residues 4 to 24; sequence TVLLALAVLLAVAVTGAVLFL. At 25 to 431 the chain is on the extracellular side; that stretch reads NHTHTPGTAP…MKIRPVREDR (407 aa). Residues 205-428 form the Fibrinogen C-terminal domain; sequence CATGSRPRDC…FSEMKIRPVR (224 aa). Residues C214 and C243 are joined by a disulfide bond. N310 is a glycosylation site (N-linked (GlcNAc...) asparagine). Residues D363 and D365 each coordinate Ca(2+). Residues C371 and C384 are joined by a disulfide bond.

Homotetramer; disulfide-linked.

Its subcellular location is the membrane. Its function is as follows. Acetyl group-binding receptor which shows a high-affinity and calcium-dependent binding to acetylated structures such as chitin, some N-acetylated carbohydrates, and amino acids, but not to their non-acetylated counterparts. Can facilitate the endocytosis of acetylated components. In Macaca fascicularis (Crab-eating macaque), this protein is Fibrinogen C domain-containing protein 1 (FIBCD1).